Reading from the N-terminus, the 397-residue chain is S-adenosylmethionine synthase (397 aa).

His-17 lines the ATP pocket. Residue Asp-19 coordinates Mg(2+). Glu-45 is a K(+) binding site. 2 residues coordinate L-methionine: Glu-58 and Gln-101. The flexible loop stretch occupies residues 101–111; that stretch reads QSPDIAQGVDK. ATP is bound by residues 176–178, 243–244, Asp-252, 258–259, and Lys-279; these read DGK, RF, and RK. L-methionine is bound at residue Asp-252. Lys-283 contacts L-methionine.

It belongs to the AdoMet synthase family. As to quaternary structure, homotetramer; dimer of dimers. Mg(2+) is required as a cofactor. K(+) serves as cofactor.

Its subcellular location is the cytoplasm. The catalysed reaction is L-methionine + ATP + H2O = S-adenosyl-L-methionine + phosphate + diphosphate. It participates in amino-acid biosynthesis; S-adenosyl-L-methionine biosynthesis; S-adenosyl-L-methionine from L-methionine: step 1/1. Its function is as follows. Catalyzes the formation of S-adenosylmethionine (AdoMet) from methionine and ATP. The overall synthetic reaction is composed of two sequential steps, AdoMet formation and the subsequent tripolyphosphate hydrolysis which occurs prior to release of AdoMet from the enzyme. The sequence is that of S-adenosylmethionine synthase from Staphylococcus aureus.